A 255-amino-acid chain; its full sequence is MIDVFPVRAFKDNYIWIVHNQQFALIIDPGDATPVLAWISQQNLQPIAILCTHHHHDHTGGIPSLVQEFAIPVYGPANEKIPGMTHPLTGGDTLSFPELSLEFSVLDIPGHTAGHIAYYGQNYLFCGDTLFACGCGRIFEGSAQQMLASLQKLASLPDETLVYCAHEYTLANVRFARVLDPDNPDLIKLESTVEEKLKQNIPTLPSSLAVEKATNPFLRCDQPAIIHSASQHVGRHLNDPVSVFAAIRDWKNNFQ.

H53, H55, D57, H58, H111, D128, and H166 together coordinate Zn(2+).

This sequence belongs to the metallo-beta-lactamase superfamily. Glyoxalase II family. Monomer. The cofactor is Zn(2+).

It carries out the reaction an S-(2-hydroxyacyl)glutathione + H2O = a 2-hydroxy carboxylate + glutathione + H(+). The protein operates within secondary metabolite metabolism; methylglyoxal degradation; (R)-lactate from methylglyoxal: step 2/2. In terms of biological role, thiolesterase that catalyzes the hydrolysis of S-D-lactoyl-glutathione to form glutathione and D-lactic acid. This is Hydroxyacylglutathione hydrolase from Nitrosomonas eutropha (strain DSM 101675 / C91 / Nm57).